Here is a 402-residue protein sequence, read N- to C-terminus: Phosphoglycerate kinase (402 aa).

Residues 24–26 (DFN), Arg-40, 63–66 (HFGR), Arg-122, and Arg-155 contribute to the substrate site. Residues Lys-206, Gly-297, Glu-328, and 358-361 (GGDS) each bind ATP.

It belongs to the phosphoglycerate kinase family. In terms of assembly, monomer.

It localises to the cytoplasm. The enzyme catalyses (2R)-3-phosphoglycerate + ATP = (2R)-3-phospho-glyceroyl phosphate + ADP. It functions in the pathway carbohydrate degradation; glycolysis; pyruvate from D-glyceraldehyde 3-phosphate: step 2/5. The chain is Phosphoglycerate kinase from Prochlorococcus marinus (strain MIT 9301).